A 389-amino-acid chain; its full sequence is Acetate kinase (389 aa).

N7 is a Mg(2+) binding site. K14 lines the ATP pocket. Residue R88 participates in substrate binding. Catalysis depends on D145, which acts as the Proton donor/acceptor. ATP is bound by residues 205-209 (HLGNG), 279-281 (DLR), and 324-328 (GIGEN). Residue E375 participates in Mg(2+) binding.

Belongs to the acetokinase family. As to quaternary structure, homodimer. Requires Mg(2+) as cofactor. Mn(2+) is required as a cofactor.

The protein resides in the cytoplasm. The enzyme catalyses acetate + ATP = acetyl phosphate + ADP. It participates in metabolic intermediate biosynthesis; acetyl-CoA biosynthesis; acetyl-CoA from acetate: step 1/2. Catalyzes the formation of acetyl phosphate from acetate and ATP. Can also catalyze the reverse reaction. The chain is Acetate kinase from Sulfurimonas denitrificans (strain ATCC 33889 / DSM 1251) (Thiomicrospira denitrificans (strain ATCC 33889 / DSM 1251)).